The following is a 443-amino-acid chain: ATP-dependent protease ATPase subunit HslU (443 aa).

ATP is bound by residues Ile-18, 60-65, Asp-256, Glu-321, and Arg-393; that span reads GVGKTE.

It belongs to the ClpX chaperone family. HslU subfamily. As to quaternary structure, a double ring-shaped homohexamer of HslV is capped on each side by a ring-shaped HslU homohexamer. The assembly of the HslU/HslV complex is dependent on binding of ATP.

It localises to the cytoplasm. Functionally, ATPase subunit of a proteasome-like degradation complex; this subunit has chaperone activity. The binding of ATP and its subsequent hydrolysis by HslU are essential for unfolding of protein substrates subsequently hydrolyzed by HslV. HslU recognizes the N-terminal part of its protein substrates and unfolds these before they are guided to HslV for hydrolysis. This Buchnera aphidicola subsp. Schizaphis graminum (strain Sg) protein is ATP-dependent protease ATPase subunit HslU.